The following is a 624-amino-acid chain: Probable Xaa-Pro aminopeptidase P (624 aa).

Residues D414, D425, E530, and E544 each coordinate Mn(2+).

The protein belongs to the peptidase M24B family. The cofactor is Mn(2+).

It catalyses the reaction Release of any N-terminal amino acid, including proline, that is linked to proline, even from a dipeptide or tripeptide.. In terms of biological role, catalyzes the removal of a penultimate prolyl residue from the N-termini of peptides. The chain is Probable Xaa-Pro aminopeptidase P (AMPP) from Chaetomium globosum (strain ATCC 6205 / CBS 148.51 / DSM 1962 / NBRC 6347 / NRRL 1970) (Soil fungus).